Reading from the N-terminus, the 274-residue chain is Undecaprenyl-diphosphatase 1 (274 aa).

Transmembrane regions (helical) follow at residues 47 to 67 (QVFL…LYFN), 85 to 105 (VSMW…GIPF), 113 to 133 (FYNY…FIMI), 150 to 170 (ITYT…VFPG), 196 to 216 (FFLA…KFGL), 225 to 245 (ILFI…KFLM), and 253 to 273 (FKAF…YFLI).

The protein belongs to the UppP family.

The protein localises to the cell membrane. It catalyses the reaction di-trans,octa-cis-undecaprenyl diphosphate + H2O = di-trans,octa-cis-undecaprenyl phosphate + phosphate + H(+). Catalyzes the dephosphorylation of undecaprenyl diphosphate (UPP). Confers resistance to bacitracin. The polypeptide is Undecaprenyl-diphosphatase 1 (Clostridium acetobutylicum (strain ATCC 824 / DSM 792 / JCM 1419 / IAM 19013 / LMG 5710 / NBRC 13948 / NRRL B-527 / VKM B-1787 / 2291 / W)).